The primary structure comprises 883 residues: MPGGGSQEYGVLCIQEYRKNSKVESSTRNNFMGLKDHLGHDLGHLYVESTDPQLSPAVPWSTVENPSMDTVNVGKDEKEASEENASSGDSEENTNSDHESEQLGSISVEPGLITKTHRQLCRSPCLEPHILKRNEILQDFKPEESQTTSKEAKKPPDVVREYQTKLEFALKLGYSEEQVQLVLNKLGTDALINDILGELVKLGNKSEADQTVSTINTITRETSSLESQRSESPMQEIVTDDGENLRPIVIDGSNVAMSHGNKEVFSCRGIKLAVDWFLERGHKDITVFVPAWRKEQSRPDALITDQEILRKLEKEKILVFTPSRRVQGRRVVCYDDRFIVKLAFESDGIIVSNDNYRDLANEKPEWKKFIDERLLMYSFVNDKFMPPDDPLGRHGPSLDNFLRKKPIVPEHKKQPCPYGKKCTYGHKCKYYHPERGSQPQRSVADELRAMSRNTAAKTANEGGLVKSNSVPCSTKADSTSDVKRGAPKRQSDPSIRTQVYQDLEEKLPTKNKLETRSVPSLVSIPATSTAKPQSTTSLSNGLPSGVHFPPQDQRPQGQYPSMMMATKNHGTPMPYEQYPKCDSPVDIGYYSMLNAYSNLSLSGPRSPERRFSLDTDYRISSVASDCSSEGSMSCGSSDSYVGYNDRSYVSSPDPQLEENLKCQHMHPHSRLNPQPFLQNFHDPLTRGQSYSHEEPKFHHKPPLPHLALHLPHSAVGARSSCPGDYPSPPSSAHSKAPHLGRSLVATRIDSISDSRLYDSSPSRQRKPYSRQEGLGSWERPGYGIDAYGYRQTYSLPDNSTQPCYEQFTFQSLPEQQEPAWRIPYCGMPQDPPRYQDNREKIYINLCNIFPPDLVRIVMKRNPHMTDAQQLAAAILVEKSQLGY.

Disordered regions lie at residues 53-109 (QLSP…ISVE) and 139-158 (DFKP…PPDV). Serine 230 carries the phosphoserine modification. One can recognise an RNase NYN domain in the interval 245-400 (LRPIVIDGSN…LGRHGPSLDN (156 aa)). The C3H1-type zinc-finger motif lies at 410–435 (EHKKQPCPYGKKCTYGHKCKYYHPER). 3 disordered regions span residues 456–551 (AKTA…FPPQ), 680–738 (FHDP…KAPH), and 754–775 (SRLY…EGLG). The span at 466-477 (KSNSVPCSTKAD) shows a compositional bias: polar residues. Basic and acidic residues predominate over residues 503-515 (LEEKLPTKNKLET). Polar residues predominate over residues 517-542 (SVPSLVSIPATSTAKPQSTTSLSNGL). Residues 705-714 (HLALHLPHSA) are compositionally biased toward low complexity.

It belongs to the ZC3H12 family. Requires Mg(2+) as cofactor.

Functionally, may function as RNase and regulate the levels of target RNA species. The protein is Probable ribonuclease ZC3H12C (ZC3H12C) of Homo sapiens (Human).